Here is a 405-residue protein sequence, read N- to C-terminus: MSQSIKLFSVLSDQFQNNPYAYFSQLREEDPVHYEESIDSYFISRYHDVRYILQHPDIFTTKSLVERAEPVMRGPVLAQMHGKEHSAKRRIVVRSFIGDALDHLSPLIKQNAENLLAPYLERGKSDLVNDFGKTFAVCVTMDMLGLDKRDHEKISEWHSGVADFITSISQSPEARAHSLWCSEQLSQYLMPVIKERRVNPGSDLISILCTSEYEGMALSDKDILALILNVLLAATEPADKTLALMIYHLLNNPEQMNDVLADRSLVPRAIAETLRYKPPVQLIPRQLSQDTVVGGMEIKKDTIVFCMIGAANRDPEAFEQPDVFNIHREDLGIKSAFSGAARHLAFGSGIHNCVGAAFAKNEIEIVANIVLDKMRNIRLEEDFCYAESGLYTRGPVSLLVAFDGA.

Lys62, Asn229, Arg285, and Cys353 together coordinate heme.

The protein belongs to the cytochrome P450 family. Homodimer. Heme serves as cofactor.

The catalysed reaction is cyclo(L-leucyl-L-leucyl) + 6 reduced [2Fe-2S]-[ferredoxin] + 3 O2 + 4 H(+) = pulcherriminic acid + 6 oxidized [2Fe-2S]-[ferredoxin] + 4 H2O. Involved in the biosynthesis of pulcherrimin, a red extracellular pigment. Catalyzes the oxidation of cyclo(L-Leu-L-Leu) (cLL) to yield pulcherriminic acid which forms pulcherrimin via a nonenzymic reaction with Fe(3+). Substrates with small alkyl groups (cAA, cLG, cLP) exhibit weaker binding to CYP134A1, but substrates with larger hydrophobic side chains bind in a similar regime to cLL. This chain is Pulcherriminic acid synthase (cypX), found in Bacillus subtilis (strain 168).